Here is a 259-residue protein sequence, read N- to C-terminus: Flap endonuclease Xni (259 aa).

D109 contributes to the Mg(2+) binding site. Positions 165–255 (VKPQQLSDYW…FNLQDLRFTA (91 aa)) constitute a 5'-3' exonuclease domain. L176, I187, and I190 together coordinate K(+). Residues 189-194 (GIGPKA) form an interaction with DNA region.

It belongs to the Xni family. Mg(2+) is required as a cofactor. Requires K(+) as cofactor.

Its function is as follows. Has flap endonuclease activity. During DNA replication, flap endonucleases cleave the 5'-overhanging flap structure that is generated by displacement synthesis when DNA polymerase encounters the 5'-end of a downstream Okazaki fragment. In Vibrio vulnificus (strain YJ016), this protein is Flap endonuclease Xni.